Consider the following 166-residue polypeptide: uncharacterized protein (166 aa).

The interval 25–116 is disordered; it reads PEEPPLWVPP…QGADEVHSQH (92 aa). At Ser105 the chain carries Phosphoserine.

This is an uncharacterized protein from Rattus norvegicus (Rat).